A 568-amino-acid polypeptide reads, in one-letter code: Hexose transporter 1 (568 aa).

Topologically, residues 1–32 (MATEEMREKSLKREAESLWDIPPESYASKACS) are cytoplasmic. A helical transmembrane segment spans residues 33-53 (CMGTAAQLVMVAVLGSFQFGF). The Extracellular segment spans residues 54–86 (NLSALNTSKAFIILDFGWCKDENGGHYSDCDTG). A disulfide bridge links Cys72 with Cys83. Residues 87 to 107 (LVYGSLINTAVFLGACVGCLL) traverse the membrane as a helical segment. Topologically, residues 108-119 (GGRLTDFGRRAS) are cytoplasmic. The helical transmembrane segment at 120–140 (LIFTHCVCTLGCILSAAAEGF) threads the bilayer. At 141–142 (PT) the chain is on the extracellular side. The helical transmembrane segment at 143-163 (LLIARLVVGVAVGMFTVCVPM) threads the bilayer. Residues 164–182 (YLSEVTPDDRRGYFGTFHQ) lie on the Cytoplasmic side of the membrane. Alpha-D-glucose is bound at residue Gln182. Gln182 contributes to the beta-D-glucose binding site. Residues 183–203 (LFITLGIFFGTLLGLAFGNAP) form a helical membrane-spanning segment. The Extracellular segment spans residues 204–220 (AGDEVYEVSTFQQAWWR). The helical transmembrane segment at 221–241 (VMLGLPAVVSLLAIWLLWFVF) threads the bilayer. Residues 242-306 (PFETPQYMVE…KAIVHPTYRS (65 aa)) lie on the Cytoplasmic side of the membrane. A helical membrane pass occupies residues 307 to 327 (VILLACLLSIMQQFTGINVLV). 3 residues coordinate alpha-D-glucose: Gln318, Gln319, and Asn324. Gln318 is a beta-D-glucose binding site. Position 324 (Asn324) interacts with beta-D-glucose. Residues 328–345 (ANSNNLYSSLKLPQDAVT) are Extracellular-facing. Residues 346–366 (GLTVGFTALNVFLTVITIPLV) form a helical membrane-spanning segment. Asn355 serves as a coordination point for beta-D-glucose. The Cytoplasmic segment spans residues 367-374 (DRLGRRTL). A helical membrane pass occupies residues 375 to 395 (LLFSEAVMFVAMGIAFVANLV). Over 396–406 (DQSNTAVQWVT) the chain is Extracellular. The helical transmembrane segment at 407–427 (VACVYVFIVGFAVGYGPVLWI) threads the bilayer. An alpha-D-glucose-binding site is contributed by Trp426. Topologically, residues 428-443 (YIHEIFPPEIKQGAAS) are cytoplasmic. Residues 444–464 (LASALNWVATVAIVLPSDFLL) form a helical membrane-spanning segment. Topologically, residues 465–469 (KQGFS) are extracellular. Residues 470–490 (VFVGICTVALAIIFVVTFIFV) traverse the membrane as a helical segment. At 491–568 (KETKGLSIEE…DDLTKGTEVV (78 aa)) the chain is on the cytoplasmic side.

This sequence belongs to the major facilitator superfamily. Sugar transporter (TC 2.A.1.1) family. Homodimer.

It localises to the cell membrane. The enzyme catalyses D-glucose(out) = D-glucose(in). It carries out the reaction D-fructose(out) = D-fructose(in). It catalyses the reaction D-galactose(in) = D-galactose(out). The catalysed reaction is D-mannose(out) = D-mannose(in). The enzyme catalyses D-glucosamine(out) = D-glucosamine(in). It carries out the reaction D-xylose(out) = D-xylose(in). Its activity is regulated as follows. Inhibited by cytochalasin B. Functionally, sodium-independent facilitative hexose transporter. Can transport D-glucose and D-mannose with high affinity, and D-fructose and D-galactose with low affinity. Can transport D-xylose and D-glucosamine. The protein is Hexose transporter 1 of Toxoplasma gondii.